The chain runs to 413 residues: Multidrug resistance protein MdtA (413 aa).

Positions 1–32 (MNAKRIRGLLIFAAVIAIAVLIWRHFTQTSPA) are cleaved as a signal peptide. Residues 32-46 (AAPGTSEQHAARTSH) are compositionally biased toward polar residues. The tract at residues 32–59 (AAPGTSEQHAARTSHSGNNSSGNGGGRR) is disordered.

Belongs to the membrane fusion protein (MFP) (TC 8.A.1) family. As to quaternary structure, part of a tripartite efflux system composed of MdtA, MdtB and MdtC.

It localises to the cell inner membrane. This chain is Multidrug resistance protein MdtA, found in Pectobacterium carotovorum subsp. carotovorum (strain PC1).